The primary structure comprises 50 residues: Disintegrin pyramidin-A (50 aa).

Residues 1–47 form the Disintegrin domain; that stretch reads DCASGPCCRDCKFLKEGTICKRARGDNMDDYCNGKTCDCPRNPHKGE. 4 cysteine pairs are disulfide-bonded: cysteine 2-cysteine 11, cysteine 7-cysteine 32, cysteine 8-cysteine 37, and cysteine 20-cysteine 39. The short motif at 24-26 is the Cell attachment site element; it reads RGD.

Belongs to the venom metalloproteinase (M12B) family. P-II subfamily. P-IIa sub-subfamily. As to quaternary structure, monomer (disintegrin). Expressed by the venom gland.

The protein localises to the secreted. Its function is as follows. Inhibits ADP-induced human platelet aggregation. This chain is Disintegrin pyramidin-A, found in Echis pyramidum leakeyi (Leakey's carpet viper).